Consider the following 347-residue polypeptide: Heat-inducible transcription repressor HrcA (347 aa).

The protein belongs to the HrcA family.

Negative regulator of class I heat shock genes (grpE-dnaK-dnaJ and groELS operons). Prevents heat-shock induction of these operons. This is Heat-inducible transcription repressor HrcA from Enterococcus faecalis (strain ATCC 700802 / V583).